Reading from the N-terminus, the 176-residue chain is NADH-quinone oxidoreductase subunit I (176 aa).

4Fe-4S ferredoxin-type domains are found at residues 47-77 and 87-116; these read LTRDPDGEERCVACHLCSAACPVDCISMQAA and AWFRINFSRCIFCGLCTEACPTLALQMTSE. Residues C57, C60, C63, C67, C96, C99, C102, and C106 each coordinate [4Fe-4S] cluster.

It belongs to the complex I 23 kDa subunit family. In terms of assembly, NDH-1 is composed of 14 different subunits. Subunits NuoA, H, J, K, L, M, N constitute the membrane sector of the complex. [4Fe-4S] cluster serves as cofactor.

It is found in the cell inner membrane. The catalysed reaction is a quinone + NADH + 5 H(+)(in) = a quinol + NAD(+) + 4 H(+)(out). Functionally, NDH-1 shuttles electrons from NADH, via FMN and iron-sulfur (Fe-S) centers, to quinones in the respiratory chain. The immediate electron acceptor for the enzyme in this species is believed to be ubiquinone. Couples the redox reaction to proton translocation (for every two electrons transferred, four hydrogen ions are translocated across the cytoplasmic membrane), and thus conserves the redox energy in a proton gradient. This Syntrophotalea carbinolica (strain DSM 2380 / NBRC 103641 / GraBd1) (Pelobacter carbinolicus) protein is NADH-quinone oxidoreductase subunit I.